The chain runs to 96 residues: Large ribosomal subunit protein bL28 (96 aa).

The interval 1–23 (MSRVCELSGKAPMTGNTVSHANN) is disordered.

Belongs to the bacterial ribosomal protein bL28 family.

In Cereibacter sphaeroides (strain ATCC 17025 / ATH 2.4.3) (Rhodobacter sphaeroides), this protein is Large ribosomal subunit protein bL28.